We begin with the raw amino-acid sequence, 404 residues long: Chorismate synthase (404 aa).

Residues Arg-43 and Arg-49 each coordinate NADP(+). FMN contacts are provided by residues 138–140 (RAS), 259–260 (QA), Gly-303, 318–322 (KPIST), and Arg-344.

This sequence belongs to the chorismate synthase family. In terms of assembly, homotetramer. The cofactor is FMNH2.

The enzyme catalyses 5-O-(1-carboxyvinyl)-3-phosphoshikimate = chorismate + phosphate. Its pathway is metabolic intermediate biosynthesis; chorismate biosynthesis; chorismate from D-erythrose 4-phosphate and phosphoenolpyruvate: step 7/7. Functionally, catalyzes the anti-1,4-elimination of the C-3 phosphate and the C-6 proR hydrogen from 5-enolpyruvylshikimate-3-phosphate (EPSP) to yield chorismate, which is the branch point compound that serves as the starting substrate for the three terminal pathways of aromatic amino acid biosynthesis. This reaction introduces a second double bond into the aromatic ring system. This chain is Chorismate synthase, found in Mycolicibacterium paratuberculosis (strain ATCC BAA-968 / K-10) (Mycobacterium paratuberculosis).